The following is a 170-amino-acid chain: Photosystem II extrinsic protein V (170 aa).

The signal sequence occupies residues 1 to 33 (MASLFASLGRSLIKLLIVLPVIIGLSISSPAMA). 4 residues coordinate heme c: cysteine 70, cysteine 73, histidine 74, and histidine 125.

The protein belongs to the cytochrome c family. PsbV subfamily. As to quaternary structure, PSII is composed of 1 copy each of membrane proteins PsbA, PsbB, PsbC, PsbD, PsbE, PsbF, PsbH, PsbI, PsbJ, PsbK, PsbL, PsbM, PsbT, PsbX, PsbY, Psb30/Ycf12, peripheral proteins PsbO, CyanoQ (PsbQ), PsbU, PsbV and a large number of cofactors. It forms dimeric complexes. Heme c serves as cofactor.

Its subcellular location is the cellular thylakoid membrane. One of the extrinsic, lumenal subunits of photosystem II (PSII). PSII is a light-driven water plastoquinone oxidoreductase, using light energy to abstract electrons from H(2)O, generating a proton gradient subsequently used for ATP formation. The extrinsic proteins stabilize the structure of photosystem II oxygen-evolving complex (OEC), the ion environment of oxygen evolution and protect the OEC against heat-induced inactivation. Low-potential cytochrome c that plays a role in the OEC of PSII. This Prochlorococcus marinus (strain MIT 9313) protein is Photosystem II extrinsic protein V.